The chain runs to 489 residues: Glutamyl-tRNA(Gln) amidotransferase subunit A (489 aa).

Residues lysine 77 and serine 152 each act as charge relay system in the active site. Serine 176 serves as the catalytic Acyl-ester intermediate.

This sequence belongs to the amidase family. GatA subfamily. As to quaternary structure, heterotrimer of A, B and C subunits.

The catalysed reaction is L-glutamyl-tRNA(Gln) + L-glutamine + ATP + H2O = L-glutaminyl-tRNA(Gln) + L-glutamate + ADP + phosphate + H(+). Allows the formation of correctly charged Gln-tRNA(Gln) through the transamidation of misacylated Glu-tRNA(Gln) in organisms which lack glutaminyl-tRNA synthetase. The reaction takes place in the presence of glutamine and ATP through an activated gamma-phospho-Glu-tRNA(Gln). The polypeptide is Glutamyl-tRNA(Gln) amidotransferase subunit A (Protochlamydia amoebophila (strain UWE25)).